Reading from the N-terminus, the 132-residue chain is Small ribosomal subunit protein uS8 (132 aa).

It belongs to the universal ribosomal protein uS8 family. In terms of assembly, part of the 30S ribosomal subunit. Contacts proteins S5 and S12.

One of the primary rRNA binding proteins, it binds directly to 16S rRNA central domain where it helps coordinate assembly of the platform of the 30S subunit. The polypeptide is Small ribosomal subunit protein uS8 (Syntrophotalea carbinolica (strain DSM 2380 / NBRC 103641 / GraBd1) (Pelobacter carbinolicus)).